Reading from the N-terminus, the 192-residue chain is Inosine triphosphate pyrophosphatase (192 aa).

10–15 (TGNANK) is an ITP binding site. E43 contributes to the Mg(2+) binding site. ITP-binding positions include K56, 74–75 (DT), K91, 149–152 (FGWD), K173, and 178–179 (HR).

The protein belongs to the HAM1 NTPase family. In terms of assembly, homodimer. Mg(2+) is required as a cofactor. Mn(2+) serves as cofactor.

It localises to the cytoplasm. The protein resides in the nucleus. It carries out the reaction ITP + H2O = IMP + diphosphate + H(+). The catalysed reaction is dITP + H2O = dIMP + diphosphate + H(+). It catalyses the reaction XTP + H2O = XMP + diphosphate + H(+). Functionally, pyrophosphatase that hydrolyzes non-canonical purine nucleotides such as inosine triphosphate (ITP), deoxyinosine triphosphate (dITP) or xanthosine 5'-triphosphate (XTP) to their respective monophosphate derivatives. The enzyme does not distinguish between the deoxy- and ribose forms. Probably excludes non-canonical purines from RNA and DNA precursor pools, thus preventing their incorporation into RNA and DNA and avoiding chromosomal lesions. The chain is Inosine triphosphate pyrophosphatase from Candida glabrata (strain ATCC 2001 / BCRC 20586 / JCM 3761 / NBRC 0622 / NRRL Y-65 / CBS 138) (Yeast).